The following is an 860-amino-acid chain: MTAQHQATGTAPGANLSAHTPMMQQYLTLKAENPEILLFYRMGDFYELFYDDARKASQLLDISLTKRGQSAGSPIPMAGVPYHAIEGYLAKLVQLGESAAICEQVGDPATSKGPVERKVIRIITPGTVSDEALLSERQDNLIAAVYHDGRRFGYGTMDIGSGRFFINQFEKEETLLAELQRTNPAELLYPESFTFLHHVEGRRGLRRRPEWEFELGTARKLLCQQFGTQDLVGFGVEQSETALCAAGCLMQYVKDTQRTALPHIRSVRLEQPDHAVIMDAATRRNLELTQNLAGGHDNTLSAVLDCTATPMGSRLLKRWIHQPIRDQVILKGRQSTIKELIEQNLYDELGGLLRQVGDVERVLARLALRSARPRDLTRLRQAFAQLPELQRLLAESEHEAVQQLRERASTFPELLDLLERAVMEVPPVLIRDGGVIRDGFNQELDELRDLANGATASLARIEERERLLTGINTLKVGYNKVHGFYIEVSRANSHLVPAHYIRRQTLKNNERYIIDELKKYEDKVLTAQAQALALEKRLYEELLDALLPHLGDLQESAAALAELDVLANLAERAETLDYRCPTLIDEDQILIEAGRHPVVEQVMTDPFIANPINLQRSRRMLIITGPNMGGKSTYMRQTALIVLLAHIGAFVPADSARIGPIDRIFTRIGASDDLASGRSTFMVEMTETANILNNATARSLVLMDEIGRGTSTYDGLSLAWACAEQLASKIGAYTLFATHYFELTRLPELMEGLANVHLDAVEHGDTIAFMHAVQEGAASRSYGLQVAALAGVPKSVIQQARHKLHELESATPVAAGESRPAPVAMAPQSHPVVDELEAVRPDELTPRQALDLLYRLKQML.

625 to 632 (GPNMGGKS) serves as a coordination point for ATP.

The protein belongs to the DNA mismatch repair MutS family.

In terms of biological role, this protein is involved in the repair of mismatches in DNA. It is possible that it carries out the mismatch recognition step. This protein has a weak ATPase activity. The polypeptide is DNA mismatch repair protein MutS (Aeromonas hydrophila subsp. hydrophila (strain ATCC 7966 / DSM 30187 / BCRC 13018 / CCUG 14551 / JCM 1027 / KCTC 2358 / NCIMB 9240 / NCTC 8049)).